The following is a 149-amino-acid chain: Large ribosomal subunit protein eL24B (149 aa).

Residue S50 is modified to Phosphoserine. Residues 96–149 (QRPEVRAAARAAALKQRKDKRAASESEKKAIKAKSAASSARGQAIKNAKVAARR) are disordered. Residues 116 to 125 (RAASESEKKA) show a composition bias toward basic and acidic residues.

The protein belongs to the eukaryotic ribosomal protein eL24 family. Component of the large ribosomal subunit (LSU). Mature yeast ribosomes consist of a small (40S) and a large (60S) subunit. The 40S small subunit contains 1 molecule of ribosomal RNA (18S rRNA) and at least 33 different proteins. The large 60S subunit contains 3 rRNA molecules (25S, 5.8S and 5S rRNA) and at least 46 different proteins.

The protein resides in the cytoplasm. Its function is as follows. Component of the ribosome, a large ribonucleoprotein complex responsible for the synthesis of proteins in the cell. The small ribosomal subunit (SSU) binds messenger RNAs (mRNAs) and translates the encoded message by selecting cognate aminoacyl-transfer RNA (tRNA) molecules. The large subunit (LSU) contains the ribosomal catalytic site termed the peptidyl transferase center (PTC), which catalyzes the formation of peptide bonds, thereby polymerizing the amino acids delivered by tRNAs into a polypeptide chain. The nascent polypeptides leave the ribosome through a tunnel in the LSU and interact with protein factors that function in enzymatic processing, targeting, and the membrane insertion of nascent chains at the exit of the ribosomal tunnel. The sequence is that of Large ribosomal subunit protein eL24B (rpl2402) from Schizosaccharomyces pombe (strain 972 / ATCC 24843) (Fission yeast).